A 532-amino-acid polypeptide reads, in one-letter code: NMDA receptor synaptonuclear signaling and neuronal migration factor (532 aa).

Glycine 2 is lipidated: N-myristoyl glycine. Residues 2 to 235 (GAAASRRRAL…FSFQTATTTM (234 aa)) form a necessary and sufficient to elicit dendritic processes and synaptic contacts region. Disordered regions lie at residues 34–67 (SQSHPENRNGADHLLADAYSGHEGSPEMQPAPHN) and 127–174 (RRQR…GCAK). The segment covering 38–48 (PENRNGADHLL) has biased composition (basic and acidic residues). Residues 127–139 (RRQRERHPHHHSQ) show a composition bias toward basic residues. Residues 155 to 164 (PCQSWAGSRQ) are compositionally biased toward polar residues. Serine 206 is modified (phosphoserine). The Nuclear localization signal signature appears at 247 to 252 (RKRRKR). Residues 275–315 (RVKAQTFAERRERSFSRSWSDPTPMKADTSHDSRDSSDLQS) form a disordered region. Residues serine 292 and serine 294 each carry the phosphoserine modification. A compositionally biased stretch (basic and acidic residues) spans 302-311 (DTSHDSRDSS).

It belongs to the NSMF family. Interacts with KPNA1; the interaction occurs in a calcium-independent manner after synaptic NMDA receptor stimulation and is required for nuclear import of NSMF but is competed by CABP1. Interacts (via the central NLS-containing motif region) with CABP1 (via EF-hands 1 and 2); the interaction occurs in a calcium-dependent manner after synaptic NMDA receptor stimulation and prevents the nuclear import of NSMF. Cannot be competed by calmodulin. In terms of processing, proteolytically processed after NMDA receptor activation. Cleaved in a calcium-dependent and calpain-sensitive manner. Calpain cleavage is essential for the translocation process from dendrites to the nucleus. In terms of tissue distribution, expressed in the radiatum and pyramidale strata of the hippocampus (at protein level). Strongly expressed in the brain. Expressed in the sensory and motor cortex, hippocampus, olfactory bulb, thalamus and amygdala. In the olfactory bulb expressed in the granular cell layer, mitral cell layer and the glomerular layer. In the hippocampus highly expressed in the regions associated with neuronal cell types as CA1, CA2, CA3 and granule cells of the dentate gyrus. All isoforms have been detected in the molecular layers of the hippocampus.

It localises to the nucleus. It is found in the nucleus envelope. The protein localises to the nucleus membrane. The protein resides in the nucleus matrix. Its subcellular location is the cytoplasm. It localises to the cell cortex. It is found in the cytoskeleton. The protein localises to the cell membrane. The protein resides in the cell projection. Its subcellular location is the dendrite. It localises to the synapse. It is found in the synaptosome. The protein localises to the postsynaptic density. The protein resides in the membrane. Its function is as follows. Couples NMDA-sensitive glutamate receptor signaling to the nucleus and triggers long-lasting changes in the cytoarchitecture of dendrites and spine synapse processes. Part of the cAMP response element-binding protein (CREB) shut-off signaling pathway. Stimulates outgrowth of olfactory axons and migration of gonadotropin-releasing hormone (GnRH) and luteinizing-hormone-releasing hormone (LHRH) neuronal cells. The chain is NMDA receptor synaptonuclear signaling and neuronal migration factor (Nsmf) from Rattus norvegicus (Rat).